The following is a 594-amino-acid chain: UvrABC system protein C (594 aa).

The GIY-YIG domain occupies 17 to 94 (LEPGCYLMKD…IKQYQPRYNI (78 aa)). The region spanning 199-234 (KTILHHLEDRMNKASEQLDFEQAKEYRDMIQHIHNL) is the UVR domain.

It belongs to the UvrC family. As to quaternary structure, interacts with UvrB in an incision complex.

It localises to the cytoplasm. Its function is as follows. The UvrABC repair system catalyzes the recognition and processing of DNA lesions. UvrC both incises the 5' and 3' sides of the lesion. The N-terminal half is responsible for the 3' incision and the C-terminal half is responsible for the 5' incision. This Staphylococcus epidermidis (strain ATCC 12228 / FDA PCI 1200) protein is UvrABC system protein C.